We begin with the raw amino-acid sequence, 1100 residues long: MGNAAGSAEQPAGPAAPPPKQPAPPKQPMPAAGELEERFNRALNCMNLPPDKVQLLSQYDNEKKWELICDQERFQVKNPPAAYIQKLKSYVDTGGVSRKVAADWMSNLGFKRRVQESTQVLRELETSLRTNHIGWVQEFLNEENRGLDVLLEYLAFAQCSVTYDMESTDNGASNSEKNKPLEQSVEDLSKGPPSSVPKSRHLTIKLTPAHSRKALRNSRIVSQKDDVHVCIMCLRAIMNYQSGFSLVMNHPACVNEIALSLNNKNPRTKALVLELLAAVCLVRGGHDIILAAFDNFKEVCGEQHRFEKLMEYFRNEDSNIDFMVACMQFINIVVHSVENMNFRVFLQYEFTHLGLDLYLERLRLTESDKLQVQIQAYLDNIFDVGALLEDTETKNAVLEHMEELQEQVALLTERLRDAENESMAKIAELEKQLSQARKELETLRERFSESTAMGPSRRPPEPEKAPPAAPTRPSALELKVEELEEKGLIRILRGPGDAVSIEILPVAVATPSGGDAPTPGVPTGSPSPDLAPAAEPAPGAAPPPPPPLPGLPSPQEAPPSAPPQAPPLPGSPEPPPAPPLPGDLPPPPPPPPPPPGTDGPVPPPPPPPPPPPGGPPDALGRRDSELGPGVKAKKPIQTKFRMPLLNWVALKPSQITGTVFTELNDEKVLQELDMSDFEEQFKTKSQGPSLDLSALKSKAAQKAPSKATLIEANRAKNLAITLRKGNLGAERICQAIEAYDLQALGLDFLELLMRFLPTEYERSLITRFEREQRPMEELSEEDRFMLCFSRIPRLPERMTTLTFLGNFPDTAQLLMPQLNAIIAASMSIKSSDKLRQILEIVLAFGNYMNSSKRGAAYGFRLQSLDALLEMKSTDRKQTLLHYLVKVIAEKYPQLTGFHSDLHFLDKAGSVSLDSVLADVRSLQRGLELTQREFVRQDDCMVLKEFLRANSPTMDKLLADSKTAQEAFESVVEYFGENPKTTSPGLFFSLFSRFIKAYKKAEQEVEQWKKEAAAQEAGADTPGKGEPPAPKSPPKARRPQMDLISELKRRQQKEPLIYESDRDGAIEDIITVIKTVPFTARTGKRTSRLLCEASLGEEMPL.

Over residues 1-13 (MGNAAGSAEQPAG) the composition is skewed to low complexity. Disordered regions lie at residues 1 to 31 (MGNAAGSAEQPAGPAAPPPKQPAPPKQPMPA), 167 to 200 (STDNGASNSEKNKPLEQSVEDLSKGPPSSVPKSR), 446 to 474 (RFSESTAMGPSRRPPEPEKAPPAAPTRPS), and 510 to 635 (TPSG…AKKP). Gly-2 carries N-myristoyl glycine lipidation. Ser-7 bears the Phosphoserine mark. Positions 14 to 28 (PAAPPPKQPAPPKQP) are enriched in pro residues. Residues 27–468 (QPMPAAGELE…PPEPEKAPPA (442 aa)) form the GBD/FH3 domain. At Ser-184 the chain carries Phosphoserine. The segment covering 517–538 (PTPGVPTGSPSPDLAPAAEPAP) has biased composition (low complexity). Pro residues predominate over residues 539–615 (GAAPPPPPPL…PPPPPPPGGP (77 aa)). A phosphoserine mark is found at Ser-624 and Ser-693. The FH2 domain maps to 632-1023 (AKKPIQTKFR…QEAGADTPGK (392 aa)). The interval 1008–1037 (KKEAAAQEAGADTPGKGEPPAPKSPPKARR) is disordered. Over residues 1013–1023 (AQEAGADTPGK) the composition is skewed to low complexity. Ser-1031 is subject to Phosphoserine. The DAD domain maps to 1059 to 1090 (SDRDGAIEDIITVIKTVPFTARTGKRTSRLLC).

It belongs to the formin homology family. As to quaternary structure, interacts with RAC1, PFN1 and PFN2. Interacts (activated by RAC1) with SRGAP2 (via SH3 domain); regulates the actin filament severing activity of FMNL1. Myristoylation mediates membrane localization and blebbing. Expressed in heart, brain, placenta, lung, liver, skeletal muscle, kidney and pancreas.

The protein resides in the cytoplasm. It is found in the cell membrane. It localises to the cytoplasmic vesicle. The protein localises to the phagosome. Its subcellular location is the cell cortex. The protein resides in the cell projection. It is found in the bleb. Functionally, may play a role in the control of cell motility and survival of macrophages. Plays a role in the regulation of cell morphology and cytoskeletal organization. Required in the cortical actin filament dynamics and cell shape. This is Formin-like protein 1 (FMNL1) from Homo sapiens (Human).